The sequence spans 470 residues: Putative gustatory receptor 28b (470 aa).

Residues 1–76 (MDIEMAKEPV…KTGKKAIKKT (76 aa)) lie on the Cytoplasmic side of the membrane. The helical transmembrane segment at 77 to 97 (IFGYINGIMHIAMFVFAYSLT) threads the bilayer. The Extracellular portion of the chain corresponds to 98-119 (IYNNCESVASYFFRSRITYFGD). Residues 120–140 (LMQIVSGFIGVTVIYLTAFVP) traverse the membrane as a helical segment. The Cytoplasmic portion of the chain corresponds to 141–175 (NHRLERCLQKFHTMDVQLQTVGVKIMYSKVLRFSY). The helical transmembrane segment at 176 to 196 (MVLISMFLVNVLFTGGTFSVL) threads the bilayer. Topologically, residues 197-204 (YSSEVAPT) are extracellular. Residues 205 to 225 (MALHFTFLIQHTVIAIAIALF) form a helical membrane-spanning segment. At 226–309 (SCFTYLVEMR…ATANKYFTYQ (84 aa)) the chain is on the cytoplasmic side. A helical transmembrane segment spans residues 310 to 330 (LLTIISIAFLIIVFDAYYVLE). The Extracellular segment spans residues 331-346 (TLLGKSKRESKFKTVE). The chain crosses the membrane as a helical span at residues 347-367 (FVTFFSCQMILYLIAIISIVE). The Cytoplasmic portion of the chain corresponds to 368-423 (GSNRAIKKSEKTGGIVHSLLNKTKSAEVKEKLQQFSMQLMHLKINFTAAGLFNIDR). A helical transmembrane segment spans residues 424 to 444 (TLYFTISGALTTYLIILLQFT). At 445 to 470 (SNSPNNGYGNGSSCCETFNNMTNHTL) the chain is on the extracellular side. N-linked (GlcNAc...) asparagine glycosylation is found at Asn454, Asn464, and Asn467.

Belongs to the insect chemoreceptor superfamily. Gustatory receptor (GR) family. Gr66a subfamily. Isoforms A and E have taste neuron-specific expression restricted to the labial palps, the internal taste organs in the pharynx, and the legs. In addition to expression in a large number of taste neurons, isoform A is also expressed in a few nonchemosensory neurons, including the campaniform sensilla of the wing, leg stretch receptors, and multiple dendritic neurons in the abdomen. Isoform B is the only receptor not expressed in gustatory receptor neurons in the labellum. We observe expression of this receptor in a single large cell at the base of each maxillary palp, in campaniform sensilla of the wing, and multiple dendritic neurons in the abdomen. Isoform C is expressed by many gustatory receptor neurons in the labial palps, the pharyngeal taste clusters, and taste neurons in the legs. In addition, isoform C expressed in a single cell at the base of the maxillary palps, neurons in the Johnston's organ (JO), campaniform sensilla of the wing, stretch receptors and the femoral chordotonal organ of the legs, and multiple dendritic neurons in the abdomen. Isoform D is expressed in a small number of gustatory receptor neurons in the labial palps, the ventral cibarial sense organ (VCSO), and legs. Atypical expression is observed in three neurons in the arista, campaniform sensilla of the wing, stretch and femoral chordotonal organ receptors in the legs, and multiple dendritic neurons in the abdomen. In larvae, Isoform A is expressed in neurons of the terminal external chemosensory organ and the dorsal external chemosensory organ; and isoform E is expressed in neurons of the terminal external chemosensory organ.

Its subcellular location is the cell membrane. Its function is as follows. Probable gustatory receptor which mediates acceptance or avoidance behavior, depending on its substrates. Atypical expression also suggests nongustatory roles in the nervous system and tissues involved in proprioception, hygroreception, and other sensory modalities. It is also possible that it has chemosensory roles in the detection of internal ligands. The polypeptide is Putative gustatory receptor 28b (Gr28b) (Drosophila melanogaster (Fruit fly)).